The chain runs to 59 residues: Large ribosomal subunit protein uL30 (59 aa).

Belongs to the universal ribosomal protein uL30 family. Part of the 50S ribosomal subunit.

This Alkaliphilus oremlandii (strain OhILAs) (Clostridium oremlandii (strain OhILAs)) protein is Large ribosomal subunit protein uL30.